The sequence spans 64 residues: PYLa/PGLa A (64 aa).

Residues 1-20 (MYKQIFLCLIIAALCATIMA) form the signal peptide. Positions 21–35 (EASAFADADEDDDKR) are excised as a propeptide. A Leucine amide modification is found at Leu59. A propeptide spanning residues 60-64 (GRRDS) is cleaved from the precursor.

This sequence belongs to the gastrin/cholecystokinin family. Magainin subfamily. In terms of tissue distribution, expressed by the skin glands. Synthesized in the stomach and stored in a novel granular multinucleated cell in the gastric mucosa. Stored as active, processed peptides in large granules within the granular gland secretions of the skin.

The protein localises to the secreted. Its function is as follows. PGLa and PGLa-H display a broad-spectrum of antibacterial activity against a range of Gram-positive and Gram-negative bacteria. PGLa also displays antifungal activity against C.albicans ATCC 14053. PGLa-H shows moderate antibacterial activity against the multidrug-resistant methicillin-resistant S.aureus (MRSA) but exhibits very little hemolytic activity. This Xenopus laevis (African clawed frog) protein is PYLa/PGLa A (pgla-a).